A 1587-amino-acid chain; its full sequence is Pentafunctional AROM polypeptide (1587 aa).

The tract at residues 1-384 (MIEPTKISIL…YEPRASVVAN (384 aa)) is 3-dehydroquinate synthase. Residues 44–46 (DTN), 81–84 (EVSK), 114–116 (GGV), and Asp-119 each bind NAD(+). Arg-130 is a 7-phospho-2-dehydro-3-deoxy-D-arabino-heptonate binding site. Residue 139-140 (TT) coordinates NAD(+). 7-phospho-2-dehydro-3-deoxy-D-arabino-heptonate contacts are provided by Asp-146 and Lys-152. NAD(+) is bound at residue Lys-161. Asn-162 is a 7-phospho-2-dehydro-3-deoxy-D-arabino-heptonate binding site. Residues 179–182 (FLET) and Asn-190 each bind NAD(+). Glu-194 serves as a coordination point for Zn(2+). Residues 194–197 (EVIK) and Lys-250 each bind 7-phospho-2-dehydro-3-deoxy-D-arabino-heptonate. Glu-260 (proton acceptor; for 3-dehydroquinate synthase activity) is an active-site residue. 7-phospho-2-dehydro-3-deoxy-D-arabino-heptonate-binding positions include 264–268 (RNLLN) and His-271. His-271 contacts Zn(2+). His-275 functions as the Proton acceptor; for 3-dehydroquinate synthase activity in the catalytic mechanism. Positions 287 and 356 each coordinate 7-phospho-2-dehydro-3-deoxy-D-arabino-heptonate. Residue His-287 coordinates Zn(2+). Residues 397 to 842 (VFPGVSPKST…WDTLRLKFAV (446 aa)) are EPSP synthase. The active-site For EPSP synthase activity is Cys-824. The tract at residues 864-1055 (SASVFIIGMR…KKKQHSFFVS (192 aa)) is shikimate kinase. 871 to 878 (GMRGAGKT) lines the ATP pocket. The tract at residues 1056–1276 (LTLPDLRPAG…AAPGQLSATE (221 aa)) is 3-dehydroquinase. The active-site Proton acceptor; for 3-dehydroquinate dehydratase activity is the His-1179. The active-site Schiff-base intermediate with substrate; for 3-dehydroquinate dehydratase activity is the Lys-1207. The tract at residues 1289–1587 (KKRFALFGTP…RDAVLGTKAD (299 aa)) is shikimate dehydrogenase.

In the N-terminal section; belongs to the sugar phosphate cyclases superfamily. Dehydroquinate synthase family. This sequence in the 2nd section; belongs to the EPSP synthase family. It in the 3rd section; belongs to the shikimate kinase family. The protein in the 4th section; belongs to the type-I 3-dehydroquinase family. In the C-terminal section; belongs to the shikimate dehydrogenase family. As to quaternary structure, homodimer. Requires Zn(2+) as cofactor.

The protein localises to the cytoplasm. The enzyme catalyses 7-phospho-2-dehydro-3-deoxy-D-arabino-heptonate = 3-dehydroquinate + phosphate. The catalysed reaction is 3-dehydroquinate = 3-dehydroshikimate + H2O. It carries out the reaction shikimate + NADP(+) = 3-dehydroshikimate + NADPH + H(+). It catalyses the reaction shikimate + ATP = 3-phosphoshikimate + ADP + H(+). The enzyme catalyses 3-phosphoshikimate + phosphoenolpyruvate = 5-O-(1-carboxyvinyl)-3-phosphoshikimate + phosphate. Its pathway is metabolic intermediate biosynthesis; chorismate biosynthesis; chorismate from D-erythrose 4-phosphate and phosphoenolpyruvate: step 2/7. It functions in the pathway metabolic intermediate biosynthesis; chorismate biosynthesis; chorismate from D-erythrose 4-phosphate and phosphoenolpyruvate: step 3/7. The protein operates within metabolic intermediate biosynthesis; chorismate biosynthesis; chorismate from D-erythrose 4-phosphate and phosphoenolpyruvate: step 4/7. It participates in metabolic intermediate biosynthesis; chorismate biosynthesis; chorismate from D-erythrose 4-phosphate and phosphoenolpyruvate: step 5/7. Its pathway is metabolic intermediate biosynthesis; chorismate biosynthesis; chorismate from D-erythrose 4-phosphate and phosphoenolpyruvate: step 6/7. Its function is as follows. The AROM polypeptide catalyzes 5 consecutive enzymatic reactions in prechorismate polyaromatic amino acid biosynthesis. This chain is Pentafunctional AROM polypeptide, found in Aspergillus clavatus (strain ATCC 1007 / CBS 513.65 / DSM 816 / NCTC 3887 / NRRL 1 / QM 1276 / 107).